The chain runs to 203 residues: Imidazoleglycerol-phosphate dehydratase (203 aa).

Residues 184-203 (DPRRSSQIPSSKGVLEQAGQ) are disordered.

The protein belongs to the imidazoleglycerol-phosphate dehydratase family.

It localises to the cytoplasm. The enzyme catalyses D-erythro-1-(imidazol-4-yl)glycerol 3-phosphate = 3-(imidazol-4-yl)-2-oxopropyl phosphate + H2O. The protein operates within amino-acid biosynthesis; L-histidine biosynthesis; L-histidine from 5-phospho-alpha-D-ribose 1-diphosphate: step 6/9. The polypeptide is Imidazoleglycerol-phosphate dehydratase (Prochlorococcus marinus (strain NATL1A)).